The primary structure comprises 189 residues: Calcyphosin (189 aa).

4 consecutive EF-hand domains span residues 21–56, 57–92, 93–128, and 136–172; these read LGIQ…LGLV, LDTA…PMSQ, AREA…RTHP, and TEEE…VSAS. 14 residues coordinate Ca(2+): Asp-34, Asp-36, Ser-38, Ser-40, Glu-45, Asp-70, Asp-72, Ser-74, Thr-76, Glu-81, Asp-106, Ser-108, Asp-110, and Asp-117. Ser-40 carries the post-translational modification Phosphoserine; by PKA.

As to quaternary structure, monomer. Does not form oligomers in the presence of calcium. Phosphorylated in response to thyrotropin and cAMP. In terms of tissue distribution, detected in thyroid, salivary gland, lung, brain and cerebellum (at protein level).

The protein localises to the cytoplasm. Its function is as follows. Calcium-binding protein. May play a role in cellular signaling events (Potential). This Canis lupus familiaris (Dog) protein is Calcyphosin (CAPS).